Reading from the N-terminus, the 638-residue chain is 3D-(3,5/4)-trihydroxycyclohexane-1,2-dione hydrolase (638 aa).

A thiamine diphosphate-binding site is contributed by Glu67. A thiamine pyrophosphate binding region spans residues 442–523 (SLPGDLQRLW…INIMLFDNSG (82 aa)). The Mg(2+) site is built by Asp494 and Asn521.

The protein belongs to the TPP enzyme family. It depends on Mg(2+) as a cofactor. Requires thiamine diphosphate as cofactor.

The enzyme catalyses 3D-3,5/4-trihydroxycyclohexane-1,2-dione + H2O = 5-deoxy-D-glucuronate + H(+). It participates in polyol metabolism; myo-inositol degradation into acetyl-CoA; acetyl-CoA from myo-inositol: step 3/7. Involved in the cleavage of the C1-C2 bond of 3D-(3,5/4)-trihydroxycyclohexane-1,2-dione (THcHDO) to yield 5-deoxy-glucuronate (5DG). The protein is 3D-(3,5/4)-trihydroxycyclohexane-1,2-dione hydrolase of Listeria monocytogenes serovar 1/2a (strain ATCC BAA-679 / EGD-e).